Consider the following 260-residue polypeptide: Cytochrome c oxidase subunit 2 (260 aa).

Residues 1-41 (MIVREWLFFTMAPCDAAEPWQLGFQDAATPMMQGIIDLHHD) are Mitochondrial intermembrane-facing. A helical transmembrane segment spans residues 42-58 (IFFFLILILVFVSWILV). The Mitochondrial matrix segment spans residues 59–82 (RALWHFHYKKNPIPQRIVHGTTIE). Residues 83–104 (IIRTIFPSIILMFIAIPSFALL) traverse the membrane as a helical segment. Over 105–260 (YSMDEVVVDP…NQLIPQTGEA (156 aa)) the chain is Mitochondrial intermembrane. Cu cation contacts are provided by histidine 187, cysteine 222, glutamate 224, cysteine 226, histidine 230, and methionine 233. Position 224 (glutamate 224) interacts with Mg(2+).

This sequence belongs to the cytochrome c oxidase subunit 2 family. In terms of assembly, component of the cytochrome c oxidase (complex IV, CIV), a multisubunit enzyme composed of a catalytic core of 3 subunits and several supernumerary subunits. The complex exists as a monomer or a dimer and forms supercomplexes (SCs) in the inner mitochondrial membrane with ubiquinol-cytochrome c oxidoreductase (cytochrome b-c1 complex, complex III, CIII). Cu cation is required as a cofactor.

It localises to the mitochondrion inner membrane. It carries out the reaction 4 Fe(II)-[cytochrome c] + O2 + 8 H(+)(in) = 4 Fe(III)-[cytochrome c] + 2 H2O + 4 H(+)(out). Component of the cytochrome c oxidase, the last enzyme in the mitochondrial electron transport chain which drives oxidative phosphorylation. The respiratory chain contains 3 multisubunit complexes succinate dehydrogenase (complex II, CII), ubiquinol-cytochrome c oxidoreductase (cytochrome b-c1 complex, complex III, CIII) and cytochrome c oxidase (complex IV, CIV), that cooperate to transfer electrons derived from NADH and succinate to molecular oxygen, creating an electrochemical gradient over the inner membrane that drives transmembrane transport and the ATP synthase. Cytochrome c oxidase is the component of the respiratory chain that catalyzes the reduction of oxygen to water. Electrons originating from reduced cytochrome c in the intermembrane space (IMS) are transferred via the dinuclear copper A center (CU(A)) of subunit 2 and heme A of subunit 1 to the active site in subunit 1, a binuclear center (BNC) formed by heme A3 and copper B (CU(B)). The BNC reduces molecular oxygen to 2 water molecules using 4 electrons from cytochrome c in the IMS and 4 protons from the mitochondrial matrix. The polypeptide is Cytochrome c oxidase subunit 2 (COX2) (Beta vulgaris (Sugar beet)).